We begin with the raw amino-acid sequence, 268 residues long: Putative esterase/lipase 2 (268 aa).

Residue H29 is part of the active site. The active-site Charge relay system is the S98.

This sequence belongs to the lipase/esterase LIP3/BchO family.

In Mycoplasma genitalium (strain ATCC 33530 / DSM 19775 / NCTC 10195 / G37) (Mycoplasmoides genitalium), this protein is Putative esterase/lipase 2.